The chain runs to 279 residues: Shikimate dehydrogenase (NADP(+)) (279 aa).

Residues Ser21–Ser23 and Thr68 each bind shikimate. Residue Lys72 is the Proton acceptor of the active site. Asn93 and Asp108 together coordinate shikimate. Residues Gly130–Ala134 and Leu219 contribute to the NADP(+) site. Position 221 (Tyr221) interacts with shikimate. An NADP(+)-binding site is contributed by Gly242.

This sequence belongs to the shikimate dehydrogenase family. In terms of assembly, homodimer.

It catalyses the reaction shikimate + NADP(+) = 3-dehydroshikimate + NADPH + H(+). It participates in metabolic intermediate biosynthesis; chorismate biosynthesis; chorismate from D-erythrose 4-phosphate and phosphoenolpyruvate: step 4/7. Functionally, involved in the biosynthesis of the chorismate, which leads to the biosynthesis of aromatic amino acids. Catalyzes the reversible NADPH linked reduction of 3-dehydroshikimate (DHSA) to yield shikimate (SA). This Oleidesulfovibrio alaskensis (strain ATCC BAA-1058 / DSM 17464 / G20) (Desulfovibrio alaskensis) protein is Shikimate dehydrogenase (NADP(+)).